A 747-amino-acid polypeptide reads, in one-letter code: ATPase family gene 2 protein homolog B (747 aa).

Methionine 1 carries the post-translational modification N-acetylmethionine. ATP is bound by residues 234 to 241 (GPPGVGKT) and 500 to 507 (GPPGCAKT).

Belongs to the AAA ATPase family. AFG2 subfamily. Part of the 55LCC heterohexameric ATPase complex composed at least of AIRIM, AFG2A, AFG2B and CINP. Associates with pre-60S ribosomal particles. In adult ear, expressed at low levels in neurosensory hair cells (inner and outer) and supporting cells (pillar and Deiter cells).

The protein localises to the cytoplasm. The protein resides in the cytoskeleton. Its subcellular location is the spindle. It is found in the nucleus. The catalysed reaction is ATP + H2O = ADP + phosphate + H(+). Its activity is regulated as follows. In the context of 55LCC heterohexameric ATPase complex, the ATPase activity is stimulated by DNA binding and inhibited in presence of RNA. Functionally, ATP-dependent chaperone part of the 55LCC heterohexameric ATPase complex which is chromatin-associated and promotes replisome proteostasis to maintain replication fork progression and genome stability. Required for replication fork progression, sister chromatid cohesion, and chromosome stability. The ATPase activity is specifically enhanced by replication fork DNA and is coupled to cysteine protease-dependent cleavage of replisome substrates in response to replication fork damage. Uses ATPase activity to process replisome substrates in S-phase, facilitating their proteolytic turnover from chromatin to ensure DNA replication and mitotic fidelity. Plays an essential role in the cytoplasmic maturation steps of pre-60S ribosomal particles by promoting the release of shuttling protein RSL24D1/RLP24 from the pre-ribosomal particles. This chain is ATPase family gene 2 protein homolog B (Afg2b), found in Mus musculus (Mouse).